The primary structure comprises 216 residues: Phosphorylated carbohydrates phosphatase TM_1254 (216 aa).

Asp7 acts as the Nucleophile in catalysis.

It belongs to the HAD-like hydrolase superfamily. It depends on Co(2+) as a cofactor. The cofactor is Mg(2+). Requires Mn(2+) as cofactor. Ni(2+) serves as cofactor.

Displays high phosphatase activity toward erythrose 4-phosphate, fructose 6-phosphate, 2-deoxyglucose 6-phosphate, and mannose 6-phosphate. May have a role in the intracellular metabolism of many phosphorylated carbohydrates. The chain is Phosphorylated carbohydrates phosphatase TM_1254 from Thermotoga maritima (strain ATCC 43589 / DSM 3109 / JCM 10099 / NBRC 100826 / MSB8).